A 251-amino-acid polypeptide reads, in one-letter code: tRNA (guanine-N(7)-)-methyltransferase (251 aa).

Residues Gly72, 95-96 (EI), 132-133 (NA), and Leu152 each bind S-adenosyl-L-methionine. Asp155 is an active-site residue. An S-adenosyl-L-methionine-binding site is contributed by 230-232 (SEE).

It belongs to the class I-like SAM-binding methyltransferase superfamily. TrmB family.

It localises to the nucleus. The catalysed reaction is guanosine(46) in tRNA + S-adenosyl-L-methionine = N(7)-methylguanosine(46) in tRNA + S-adenosyl-L-homocysteine. Its pathway is tRNA modification; N(7)-methylguanine-tRNA biosynthesis. Its function is as follows. Catalyzes the formation of N(7)-methylguanine at position 46 (m7G46) in tRNA. The sequence is that of tRNA (guanine-N(7)-)-methyltransferase from Drosophila willistoni (Fruit fly).